Consider the following 351-residue polypeptide: MKSVLYSYILFLSCIIINGRDIAPHAPSNGKCKDNEYNRHNLCCLSCPPGTYASRLCDSKTNTNTQCTPCGSGTFTSRNNHLPACLSCNGRCDSNQVETRSCNTTHNRICECAPGYYCLLKGSSGCKACVSQTKCGIGYGVSGHTSTGDVVCSPCGLGTYSHTVSSADKCEPVPSNTFNYIDVEINLYPVNDTSCTRTTTTGLSESISTSELTITMNHKDCDPVFRDGYFSVLNKVATSGFFTGENRYQNISKVCTLNFEIKCNNKDSSSKQLTKTKNDDGIMPHSETVTLVGDCLSSVDIYILYSNTNTQDYETDTISYHVGNVLDVDSHMPGSCDIHKLITNSKPTRFL.

The signal sequence occupies residues 1-19; sequence MKSVLYSYILFLSCIIING. TNFR-Cys repeat units lie at residues 31–67 and 69–110; these read KCKD…NTQC and PCGS…NRIC. Cystine bridges form between cysteine 32–cysteine 43, cysteine 44–cysteine 57, cysteine 47–cysteine 67, cysteine 70–cysteine 85, cysteine 88–cysteine 102, and cysteine 92–cysteine 110. Residues asparagine 103, asparagine 191, and asparagine 250 are each glycosylated (N-linked (GlcNAc...) asparagine; by host).

Belongs to the orthopoxvirus OPG002 family.

The protein resides in the secreted. In terms of biological role, inhibits host immune defense by binding to host TNF and various chemokines in the extracellular space. Binds host CC chemokines (beta chemokines) and CXC chemokines (alpha chemokines). This chain is Soluble TNF receptor II (OPG002), found in Bos taurus (Bovine).